Here is a 151-residue protein sequence, read N- to C-terminus: Acidic phospholipase A2 3 (151 aa).

An N-terminal signal peptide occupies residues 1–27; it reads MYPAHLLVLLAVCVSLLGAASIPARPL. 7 cysteine pairs are disulfide-bonded: cysteine 38–cysteine 104, cysteine 54–cysteine 151, cysteine 56–cysteine 72, cysteine 71–cysteine 132, cysteine 78–cysteine 125, cysteine 88–cysteine 118, and cysteine 111–cysteine 123. The Ca(2+) site is built by tyrosine 55, glycine 57, and glycine 59. The active site involves histidine 75. Aspartate 76 is a Ca(2+) binding site. Residue aspartate 126 is part of the active site.

Belongs to the phospholipase A2 family. Group I subfamily. D49 sub-subfamily. Ca(2+) is required as a cofactor. As to expression, expressed by the venom gland.

It localises to the secreted. The catalysed reaction is a 1,2-diacyl-sn-glycero-3-phosphocholine + H2O = a 1-acyl-sn-glycero-3-phosphocholine + a fatty acid + H(+). In terms of biological role, PLA2 catalyzes the calcium-dependent hydrolysis of the 2-acyl groups in 3-sn-phosphoglycerides. This Tropidechis carinatus (Australian rough-scaled snake) protein is Acidic phospholipase A2 3.